We begin with the raw amino-acid sequence, 409 residues long: Arginine deiminase (409 aa).

The Amidino-cysteine intermediate role is filled by Cys-399.

It belongs to the arginine deiminase family.

It localises to the cytoplasm. It carries out the reaction L-arginine + H2O = L-citrulline + NH4(+). Its pathway is amino-acid degradation; L-arginine degradation via ADI pathway; carbamoyl phosphate from L-arginine: step 1/2. In Borreliella afzelii (strain PKo) (Borrelia afzelii), this protein is Arginine deiminase.